The chain runs to 384 residues: MAP kinase-activated protein kinase 3 (384 aa).

Met-1 is subject to N-acetylmethionine. The segment at 1-22 (MDVETAEEQGGPAPPSGVPCGP) is disordered. A Protein kinase domain is found at 46–306 (QLSKQVLGLG…ITQFMNHPWI (261 aa)). Residues 52–60 (LGLGVNGKV) and Lys-75 each bind ATP. Asp-168 (proton acceptor) is an active-site residue. Thr-203 carries the phosphothreonine; by MAPK14 modification. Phosphoserine; by MAPK14 is present on Ser-253. Phosphoserine; by autocatalysis is present on Ser-309. Positions 309–345 (SMVVPQTPLHTARVLQEDRDHWDEVKEEMTSALATMR) are autoinhibitory helix. Thr-315 bears the Phosphothreonine; by MAPK14 mark. The short motif at 337-346 (MTSALATMRV) is the Nuclear export signal (NES) element. The tract at residues 347-371 (DYDQVKIKDLKTSNNRLLNKRRKKQ) is p38 MAPK-binding site. 2 short sequence motifs (bipartite nuclear localization signal) span residues 352–355 (KIKD) and 366–370 (KRRKK). The interval 359–384 (SNNRLLNKRRKKQAGSSSGSQGCNNQ) is disordered. Residues 373–384 (GSSSGSQGCNNQ) are compositionally biased toward low complexity.

This sequence belongs to the protein kinase superfamily. CAMK Ser/Thr protein kinase family. In terms of assembly, heterodimer with p38-alpha/MAPK14. The heterodimer with p38-alpha/MAPK14 forms a stable complex: molecules are positioned 'face to face' so that the ATP-binding sites of both kinases are at the heterodimer interface. Interacts with TCF3 and with polycomb proteins, such as PCH2 and BMI1/PCGF4. Post-translationally, phosphorylated and activated by MAPK1/ERK2 and MAPK3/ERK1. Phosphorylated and activated by MAP kinase p38-alpha/MAPK14 at Thr-203, Ser-253 and Thr-315.

The protein resides in the nucleus. It is found in the cytoplasm. It carries out the reaction L-seryl-[protein] + ATP = O-phospho-L-seryl-[protein] + ADP + H(+). The enzyme catalyses L-threonyl-[protein] + ATP = O-phospho-L-threonyl-[protein] + ADP + H(+). Its activity is regulated as follows. Activated following phosphorylation by p38-alpha/MAPK14 following various stresses. Inhibited by ligand 5B (2'-[2-(1,3-benzodioxol-5-yl)pyrimidin-4-yl]-5',6'-dihydrospiro[piperidine-4,7'-pyrrolo[3,2-c]pyridin]- 4'(1'h)-one) and ligand P4O (2-[2-(2-fluorophenyl)pyridin-4-yl]-1,5,6,7-tetrahydro- 4h-pyrrolo[3,2-c]pyridin-4-one), 2 ATP-competitive inhibitors. Stress-activated serine/threonine-protein kinase involved in cytokines production, endocytosis, cell migration, chromatin remodeling and transcriptional regulation. Following stress, it is phosphorylated and activated by MAP kinase p38-alpha/MAPK14, leading to phosphorylation of substrates. Phosphorylates serine in the peptide sequence, Hyd-X-R-X(2)-S, where Hyd is a large hydrophobic residue. MAPKAPK2 and MAPKAPK3, share the same function and substrate specificity, but MAPKAPK3 kinase activity and level in protein expression are lower compared to MAPKAPK2. Phosphorylates HSP27/HSPB1, KRT18, KRT20, RCSD1, RPS6KA3, TAB3 and TTP/ZFP36. Mediates phosphorylation of HSP27/HSPB1 in response to stress, leading to dissociate HSP27/HSPB1 from large small heat-shock protein (sHsps) oligomers and impair their chaperone activities and ability to protect against oxidative stress effectively. Involved in inflammatory response by regulating tumor necrosis factor (TNF) and IL6 production post-transcriptionally: acts by phosphorylating AU-rich elements (AREs)-binding proteins, such as TTP/ZFP36, leading to regulate the stability and translation of TNF and IL6 mRNAs. Phosphorylation of TTP/ZFP36, a major post-transcriptional regulator of TNF, promotes its binding to 14-3-3 proteins and reduces its ARE mRNA affinity leading to inhibition of dependent degradation of ARE-containing transcript. Involved in toll-like receptor signaling pathway (TLR) in dendritic cells: required for acute TLR-induced macropinocytosis by phosphorylating and activating RPS6KA3. Also acts as a modulator of Polycomb-mediated repression. The polypeptide is MAP kinase-activated protein kinase 3 (MAPKAPK3) (Bos taurus (Bovine)).